Here is a 115-residue protein sequence, read N- to C-terminus: Large ribosomal subunit protein bL19 (115 aa).

This sequence belongs to the bacterial ribosomal protein bL19 family.

In terms of biological role, this protein is located at the 30S-50S ribosomal subunit interface and may play a role in the structure and function of the aminoacyl-tRNA binding site. The sequence is that of Large ribosomal subunit protein bL19 from Syntrophotalea carbinolica (strain DSM 2380 / NBRC 103641 / GraBd1) (Pelobacter carbinolicus).